Consider the following 86-residue polypeptide: UPF0297 protein SSP1144 (86 aa).

This sequence belongs to the UPF0297 family.

This chain is UPF0297 protein SSP1144, found in Staphylococcus saprophyticus subsp. saprophyticus (strain ATCC 15305 / DSM 20229 / NCIMB 8711 / NCTC 7292 / S-41).